The sequence spans 644 residues: Methionine--tRNA ligase (644 aa).

The 'HIGH' region signature appears at 14–24 (YYPSAKLHIGN). Zn(2+) contacts are provided by Cys129, Cys132, Cys146, and Cys149. A 'KMSKS' region motif is present at residues 299 to 303 (KMSKS). Lys302 lines the ATP pocket. In terms of domain architecture, tRNA-binding spans 542–644 (DVDKLDLRVV…EDIPTGSIVR (103 aa)).

It belongs to the class-I aminoacyl-tRNA synthetase family. MetG type 2A subfamily. Homodimer. Zn(2+) serves as cofactor.

The protein resides in the cytoplasm. It catalyses the reaction tRNA(Met) + L-methionine + ATP = L-methionyl-tRNA(Met) + AMP + diphosphate. Is required not only for elongation of protein synthesis but also for the initiation of all mRNA translation through initiator tRNA(fMet) aminoacylation. This chain is Methionine--tRNA ligase (metG), found in Clostridium acetobutylicum (strain ATCC 824 / DSM 792 / JCM 1419 / IAM 19013 / LMG 5710 / NBRC 13948 / NRRL B-527 / VKM B-1787 / 2291 / W).